Here is a 721-residue protein sequence, read N- to C-terminus: Catalase-peroxidase 1 (721 aa).

Residues 98-223 (WHAAGSYRVA…LAAVQMGLIY (126 aa)) constitute a cross-link (tryptophyl-tyrosyl-methioninium (Trp-Tyr) (with M-249)). Histidine 99 serves as the catalytic Proton acceptor. The segment at residues 223–249 (YVNPEGVNGQPDPLRTAQDVRVTFGRM) is a cross-link (tryptophyl-tyrosyl-methioninium (Tyr-Met) (with W-98)). Residue histidine 264 participates in heme b binding.

Belongs to the peroxidase family. Peroxidase/catalase subfamily. In terms of assembly, homodimer or homotetramer. Heme b serves as cofactor. Formation of the three residue Trp-Tyr-Met cross-link is important for the catalase, but not the peroxidase activity of the enzyme.

The catalysed reaction is H2O2 + AH2 = A + 2 H2O. It carries out the reaction 2 H2O2 = O2 + 2 H2O. Bifunctional enzyme with both catalase and broad-spectrum peroxidase activity. This is Catalase-peroxidase 1 from Legionella pneumophila (strain Corby).